Consider the following 232-residue polypeptide: Ribose-5-phosphate isomerase A (232 aa).

Residues 31–34 (TGST), 88–91 (DGAD), and 101–104 (KGGG) each bind substrate. Glu110 functions as the Proton acceptor in the catalytic mechanism. Lys128 provides a ligand contact to substrate.

The protein belongs to the ribose 5-phosphate isomerase family. In terms of assembly, homodimer.

The enzyme catalyses aldehydo-D-ribose 5-phosphate = D-ribulose 5-phosphate. Its pathway is carbohydrate degradation; pentose phosphate pathway; D-ribose 5-phosphate from D-ribulose 5-phosphate (non-oxidative stage): step 1/1. Its function is as follows. Catalyzes the reversible conversion of ribose-5-phosphate to ribulose 5-phosphate. The protein is Ribose-5-phosphate isomerase A of Lactobacillus gasseri (strain ATCC 33323 / DSM 20243 / BCRC 14619 / CIP 102991 / JCM 1131 / KCTC 3163 / NCIMB 11718 / NCTC 13722 / AM63).